The chain runs to 145 residues: 3-hydroxyacyl-[acyl-carrier-protein] dehydratase FabZ (145 aa).

Histidine 48 is a catalytic residue.

The protein belongs to the thioester dehydratase family. FabZ subfamily.

The protein localises to the cytoplasm. It carries out the reaction a (3R)-hydroxyacyl-[ACP] = a (2E)-enoyl-[ACP] + H2O. Functionally, involved in unsaturated fatty acids biosynthesis. Catalyzes the dehydration of short chain beta-hydroxyacyl-ACPs and long chain saturated and unsaturated beta-hydroxyacyl-ACPs. This chain is 3-hydroxyacyl-[acyl-carrier-protein] dehydratase FabZ, found in Geobacillus thermodenitrificans (strain NG80-2).